Here is a 286-residue protein sequence, read N- to C-terminus: Bifunctional protein FolD (286 aa).

Residues glycine 164–serine 166, serine 193, and isoleucine 234 contribute to the NADP(+) site.

It belongs to the tetrahydrofolate dehydrogenase/cyclohydrolase family. Homodimer.

It carries out the reaction (6R)-5,10-methylene-5,6,7,8-tetrahydrofolate + NADP(+) = (6R)-5,10-methenyltetrahydrofolate + NADPH. The catalysed reaction is (6R)-5,10-methenyltetrahydrofolate + H2O = (6R)-10-formyltetrahydrofolate + H(+). It functions in the pathway one-carbon metabolism; tetrahydrofolate interconversion. Its function is as follows. Catalyzes the oxidation of 5,10-methylenetetrahydrofolate to 5,10-methenyltetrahydrofolate and then the hydrolysis of 5,10-methenyltetrahydrofolate to 10-formyltetrahydrofolate. The chain is Bifunctional protein FolD from Oleidesulfovibrio alaskensis (strain ATCC BAA-1058 / DSM 17464 / G20) (Desulfovibrio alaskensis).